Consider the following 156-residue polypeptide: Bacterial microcompartment shell protein PduK (156 aa).

The BMC domain occupies 4–89 (SLGLLEVSGL…PGDGILSHSV (86 aa)). Residues 81–119 (GDGILSHSVTPESESEPAPAPTPVVPHEEIPEDHAAPEA) form a disordered region. Positions 106–116 (PHEEIPEDHAA) are enriched in basic and acidic residues.

Belongs to the bacterial microcompartments protein family. In terms of assembly, interacts with shell protein PduA and assembly protein PduM. Interacts with PduP, probably with its first 18 residues. It depends on Fe cation as a cofactor.

It is found in the bacterial microcompartment. The protein operates within polyol metabolism; 1,2-propanediol degradation. In terms of biological role, a minor shell protein of the bacterial microcompartment (BMC) dedicated to 1,2-propanediol (1,2-PD) degradation. Functionally, expression of a cosmid containing the full 21-gene pdu operon in E.coli allows E.coli to grow on 1,2-propanediol (1,2-PD) with the appearance of bacterial microcompartments (BMC) in its cytoplasm. Overexpression of this protein leads to the appearance of a single large aggregate complex in the cytoplasm. Its function is as follows. The 1,2-PD-specific bacterial microcompartment (BMC) concentrates low levels of 1,2-PD catabolic enzymes, concentrates volatile reaction intermediates thus enhancing pathway flux and keeps the level of toxic, mutagenic propionaldehyde low. The chain is Bacterial microcompartment shell protein PduK from Citrobacter freundii.